Reading from the N-terminus, the 320-residue chain is Cytochrome c biogenesis protein CcsA (320 aa).

8 helical membrane-spanning segments follow: residues 14-34 (SFFL…YINI), 37-57 (ITIL…TFLL), 68-88 (LSNL…IHLI), 97-117 (WLGI…TLSL), 143-163 (MMLS…ILII), 228-248 (VISL…VWAN), 263-283 (WALI…IKGW), and 289-309 (AIIA…VNLL).

The protein belongs to the CcmF/CycK/Ccl1/NrfE/CcsA family. May interact with Ccs1.

It localises to the plastid. The protein localises to the chloroplast thylakoid membrane. In terms of biological role, required during biogenesis of c-type cytochromes (cytochrome c6 and cytochrome f) at the step of heme attachment. The polypeptide is Cytochrome c biogenesis protein CcsA (Marchantia polymorpha (Common liverwort)).